The following is a 331-amino-acid chain: Pseudouridylate synthase TRUB2, mitochondrial (331 aa).

The Nucleophile role is filled by Asp98. The tract at residues 309–331 is disordered; that stretch reads STGQPWGLKDPSSTLELESCSGQ. Polar residues predominate over residues 319–331; the sequence is PSSTLELESCSGQ.

It belongs to the pseudouridine synthase TruB family. Forms a regulatory protein-RNA complex, consisting of RCC1L, NGRN, RPUSD3, RPUSD4, TRUB2, FASTKD2 and 16S mt-rRNA.

The protein resides in the mitochondrion matrix. The enzyme catalyses a uridine in mRNA = a pseudouridine in mRNA. The catalysed reaction is uridine(55) in tRNA = pseudouridine(55) in tRNA. Minor enzyme contributing to the isomerization of uridine to pseudouridine (pseudouridylation) of specific mitochondrial mRNAs (mt-mRNAs) such as COXI and COXIII mt-mRNAs. As a component of a functional protein-RNA module, consisting of RCC1L, NGRN, RPUSD3, RPUSD4, TRUB2, FASTKD2 and 16S mitochondrial ribosomal RNA (16S mt-rRNA), controls 16S mt-rRNA abundance and is required for intra-mitochondrial translation. Also catalyzes pseudouridylation of some tRNAs, including synthesis of pseudouridine(55) from uracil-55, in the psi GC loop of a subset of tRNAs. The polypeptide is Pseudouridylate synthase TRUB2, mitochondrial (Mus musculus (Mouse)).